The sequence spans 384 residues: MNIDIEDFEKKPLYIQRIILRNSCIEFSKMLKKYWDKNIMIGIQISEREMSFEIEERDNKNEPIKITLPEYRSKGFKWYLAYLITLEYLRILKNGGNNDIVLLLDDPAVYLHPNVQKSFLEKLEELSKEYQILYNTHLMSLFNEEELDRVLLVYLDKENRTKIKRPWSNEQKDIIYPIRRALGVDKILFKENLSKILFVEGISDKFILEGLGKLETLKNLKNWYIHPLSGGDKLEDNEIVKKVRLYSCLSNFEEIKYYFLLDGDKKEKFERDKISNKIIFLGDENQEIEDLIDKNFYLDCVLETYKRIFTHDLEKFKKVKEIVEKLRKSKSKIIEELNNEFRLNNLGDFSKVDVAITIKRKLYENPELANKFEKIIDCLNGKII.

This is an uncharacterized protein from Methanocaldococcus jannaschii (strain ATCC 43067 / DSM 2661 / JAL-1 / JCM 10045 / NBRC 100440) (Methanococcus jannaschii).